The primary structure comprises 292 residues: Putative gonadotropin-releasing hormone II receptor (292 aa).

Residues methionine 1–threonine 28 lie on the Extracellular side of the membrane. An intrachain disulfide couples cysteine 26 to cysteine 101. The chain crosses the membrane as a helical span at residues leucine 29–leucine 49. The Cytoplasmic portion of the chain corresponds to aspartate 50–lysine 67. A helical membrane pass occupies residues leucine 68 to histidine 88. Residues threonine 89 to threonine 115 are Extracellular-facing. Residues tyrosine 116–tyrosine 136 form a helical membrane-spanning segment. Topologically, residues serine 137–arginine 177 are cytoplasmic. Residues leucine 178–methionine 198 traverse the membrane as a helical segment. At tryptophan 199–histidine 216 the chain is on the extracellular side. The helical transmembrane segment at isoleucine 217 to threonine 237 threads the bilayer. Residues leucine 238–isoleucine 292 are Cytoplasmic-facing.

Belongs to the G-protein coupled receptor 1 family. Phosphorylated on the C-terminal cytoplasmic tail. In terms of tissue distribution, expressed in many tissues.

The protein localises to the cell membrane. Functionally, putative receptor for gonadotropin releasing hormone II (GnRH II) which is most probably non-functional. The sequence is that of Putative gonadotropin-releasing hormone II receptor (GNRHR2) from Homo sapiens (Human).